A 109-amino-acid polypeptide reads, in one-letter code: Nucleoid-associated protein Plut_1285 (109 aa).

The protein belongs to the YbaB/EbfC family. As to quaternary structure, homodimer.

It localises to the cytoplasm. Its subcellular location is the nucleoid. Functionally, binds to DNA and alters its conformation. May be involved in regulation of gene expression, nucleoid organization and DNA protection. The sequence is that of Nucleoid-associated protein Plut_1285 from Chlorobium luteolum (strain DSM 273 / BCRC 81028 / 2530) (Pelodictyon luteolum).